The chain runs to 283 residues: Transmembrane protein 45B (283 aa).

7 helical membrane-spanning segments follow: residues 7–27 (HALP…KCPF), 55–75 (LIEG…EQFV), 99–119 (MYLF…SHHV), 121–141 (VGLD…LFYF), 153–173 (IHSL…MEVF), 187–207 (LAIL…PLSG), and 218–238 (IMFI…IVGI). A disordered region spans residues 261–283 (GLRKSTSTDSSSQKALLQESDEE). The span at 264–275 (KSTSTDSSSQKA) shows a compositional bias: polar residues.

This sequence belongs to the TMEM45 family.

It is found in the membrane. In Danio rerio (Zebrafish), this protein is Transmembrane protein 45B (tmem45b).